We begin with the raw amino-acid sequence, 177 residues long: Large ribosomal subunit protein uL10 (177 aa).

This sequence belongs to the universal ribosomal protein uL10 family. Part of the ribosomal stalk of the 50S ribosomal subunit. The N-terminus interacts with L11 and the large rRNA to form the base of the stalk. The C-terminus forms an elongated spine to which L12 dimers bind in a sequential fashion forming a multimeric L10(L12)X complex.

Its function is as follows. Forms part of the ribosomal stalk, playing a central role in the interaction of the ribosome with GTP-bound translation factors. In Mycobacterium leprae (strain Br4923), this protein is Large ribosomal subunit protein uL10.